A 585-amino-acid chain; its full sequence is Zinc finger protein Eos (585 aa).

2 disordered regions span residues 1–43 (MHTP…PDFL) and 68–98 (EKEF…SANS). Basic and acidic residues predominate over residues 25–34 (QGKDNLERDP). A compositionally biased stretch (polar residues) spans 79-98 (SVSTPNSQHSSPSRSLSANS). A Glycyl lysine isopeptide (Lys-Gly) (interchain with G-Cter in SUMO2) cross-link involves residue lysine 100. Serine 105 is subject to Phosphoserine. C2H2-type zinc fingers lie at residues 159–181 (LKCD…KRSH), 187–209 (FHCN…IKLH), 215–237 (FKCP…LRTH), and 248–271 (YKCN…ERCH). The segment at 281–585 (AQALAGQPGD…HIVRGEHKVG (305 aa)) is interaction with FOXP3. Lysine 335 bears the N6-acetyllysine mark. The segment at 410-489 (PGRLELPGSR…QPPPTIVVGR (80 aa)) is disordered. Positions 425 to 429 (PEDLA) match the CTBP-binding motif PEDLA motif. Residues 475–484 (QGPPPQPPPT) are compositionally biased toward pro residues. Lysine 500 is covalently cross-linked (Glycyl lysine isopeptide (Lys-Gly) (interchain with G-Cter in SUMO2)). 2 C2H2-type zinc fingers span residues 530 to 552 (FKCE…MGCH) and 558 to 582 (FECN…RGEH).

It belongs to the Ikaros C2H2-type zinc-finger protein family. Self-associates. Interacts with other family members; IKZF1, IKZF2, IKZF3 and IKZF5. Interacts with CTBP2. Interacts with SPI1, MITF, FOXP3 and CTBP1. Highly expressed in skeletal muscle, low levels of expression in heart, thymus, kidney, liver, and spleen. Expressed in the hematopoietic cell lines MOLT-4, NALM-6 and K-562. Highly expressed in THP-1 and M-07e cell lines, which have characteristics of myeloid and early megakaryocytic cells respectively.

The protein resides in the nucleus. Its function is as follows. DNA-binding protein that binds to the 5'GGGAATRCC-3' Ikaros-binding sequence. Transcriptional repressor. Interacts with SPI1 and MITF to repress transcription of the CTSK and ACP5 promoters via recruitment of corepressors SIN3A and CTBP2. May be involved in the development of central and peripheral nervous systems. Essential for the inhibitory function of regulatory T-cells (Treg). Mediates FOXP3-mediated gene silencing in regulatory T-cells (Treg) via recruitment of corepressor CTBP1. The chain is Zinc finger protein Eos (IKZF4) from Homo sapiens (Human).